Here is an 81-residue protein sequence, read N- to C-terminus: Cysteine-rich and transmembrane domain-containing protein PCC1 (81 aa).

Over residues 1 to 22 the composition is skewed to polar residues; it reads MNQSAQNYFSVQKPSETSSGPY. The tract at residues 1 to 34 is disordered; sequence MNQSAQNYFSVQKPSETSSGPYTSPPPIGYPTRD. The chain crosses the membrane as a helical span at residues 56 to 74; that stretch reads AIMSCFSTCMECIFCCGVC.

The protein belongs to the CYSTM1 family. As to expression, expressed at very low levels in seedlings and petioles, and at higher levels in leaves. Also present in phloem sap.

The protein resides in the cell membrane. Its function is as follows. Modulates resistance against pathogens including oomycetes (e.g. Hyaloperonospora parasitica and Phytophthora brassicae) and fungi (e.g. Phytophthora brassicae). Controls the abscisic acid-mediated (ABA) signaling pathways. Regulator of the flowering time in response to stress (e.g. UV-C). Regulates polar lipid content; promotes phosphatidylinositol (PI) and 18:0 but prevents 18:2 and 18:3 polar lipids accumulation. This is Cysteine-rich and transmembrane domain-containing protein PCC1 (PCC1) from Arabidopsis thaliana (Mouse-ear cress).